A 65-amino-acid chain; its full sequence is Putative primary metabolism protein prl65 (65 aa).

Residues 1–25 (MTKYSKGNKVEYHPIGGPSGTSTST) form a disordered region.

In terms of biological role, may play a role in primary metabolism. This is Putative primary metabolism protein prl65 from Schizosaccharomyces pombe (strain 972 / ATCC 24843) (Fission yeast).